Reading from the N-terminus, the 360-residue chain is Membrane-bound lytic murein transglycosylase C (360 aa).

An N-terminal signal peptide occupies residues 1 to 16; sequence MKKYLALALIAPLLVS. Residue Cys17 is the site of N-palmitoyl cysteine attachment. Cys17 is lipidated: S-diacylglycerol cysteine.

It belongs to the transglycosylase Slt family.

It is found in the cell outer membrane. The catalysed reaction is Exolytic cleavage of the (1-&gt;4)-beta-glycosidic linkage between N-acetylmuramic acid (MurNAc) and N-acetylglucosamine (GlcNAc) residues in peptidoglycan, from either the reducing or the non-reducing ends of the peptidoglycan chains, with concomitant formation of a 1,6-anhydrobond in the MurNAc residue.. Functionally, murein-degrading enzyme. May play a role in recycling of muropeptides during cell elongation and/or cell division. The chain is Membrane-bound lytic murein transglycosylase C from Klebsiella pneumoniae subsp. pneumoniae (strain ATCC 700721 / MGH 78578).